The following is a 102-amino-acid chain: Small ribosomal subunit protein uS10 (102 aa).

It belongs to the universal ribosomal protein uS10 family. As to quaternary structure, part of the 30S ribosomal subunit.

Functionally, involved in the binding of tRNA to the ribosomes. This Methanoculleus marisnigri (strain ATCC 35101 / DSM 1498 / JR1) protein is Small ribosomal subunit protein uS10.